The sequence spans 546 residues: MHTPGTPAPGHPDPPPLLLLTLLLLLAASGRAVPCVFCGLPKPTNITFLSINMKNVLHWNPPESLHGVEVTYTVQYFIYGQKKWLNASKCGSINRTYCDLSVETSDYEHQFYAKVKAIWEARCSEWAETERFYPFLETQVSPPEVALTTGEKSISIALTAPEKWKRNPQDHTVSMQQIYPNLKYNVSVYNTKSRRTWSQCVTNSTLVLSWLEPNTLYCVHVESLVPGPPRLPMPSQKQCISTLEVQTSAWKAKVIFWYVFLTSVIVFLFSAIGYLVYRYIHVGKEKHPANLVLIYRNEIGTRVFEPTETITLNFITFSMLDDTKISPKDMNLLDKSSDDISVNDPEHNEAWEPHWEEVEGQHLGCSSHLMDAVCGAEQRDGDTSLTQHGWLNSTIPTGETDTEPQYKVLSDFYGEGEIQLSCEPEEAARTEKISEPLVTSANLDPQLEDLHHLGQEHTVSEDGPEEETSITVVDWDPQTGRLCIPSLPIFGRDPENYGHYERDQLLEGGLLSRLYENQAPDKPEKENENCLTRFMEEWGLHVQMES.

The N-terminal stretch at 1–32 (MHTPGTPAPGHPDPPPLLLLTLLLLLAASGRA) is a signal peptide. The Extracellular segment spans residues 33–253 (VPCVFCGLPK…EVQTSAWKAK (221 aa)). 2 consecutive Fibronectin type-III domains span residues 42-138 (KPTN…FLET) and 139-245 (QVSP…TLEV). Asn-45, Asn-86, Asn-94, Asn-185, and Asn-203 each carry an N-linked (GlcNAc...) asparagine glycan. A disulfide bridge connects residues Cys-90 and Cys-98. Cys-218 and Cys-239 are joined by a disulfide. A helical membrane pass occupies residues 254–274 (VIFWYVFLTSVIVFLFSAIGY). The Cytoplasmic portion of the chain corresponds to 275-546 (LVYRYIHVGK…EWGLHVQMES (272 aa)).

This sequence belongs to the type II cytokine receptor family. As to quaternary structure, heterodimer with IL20RB and heterodimer with IL10RB.

It localises to the membrane. Its function is as follows. The IL20RA/IL20RB dimer is a receptor for IL19, IL20 and IL24. The IL20RA/IL10RB dimer is a receptor for IL26. This Mus musculus (Mouse) protein is Interleukin-20 receptor subunit alpha (Il20ra).